The primary structure comprises 331 residues: 5-dehydro-2-deoxygluconokinase (331 aa).

Belongs to the carbohydrate kinase PfkB family.

It catalyses the reaction 5-dehydro-2-deoxy-D-gluconate + ATP = 6-phospho-5-dehydro-2-deoxy-D-gluconate + ADP + H(+). It functions in the pathway polyol metabolism; myo-inositol degradation into acetyl-CoA; acetyl-CoA from myo-inositol: step 5/7. Catalyzes the phosphorylation of 5-dehydro-2-deoxy-D-gluconate (2-deoxy-5-keto-D-gluconate or DKG) to 6-phospho-5-dehydro-2-deoxy-D-gluconate (DKGP). This is 5-dehydro-2-deoxygluconokinase from Halalkalibacterium halodurans (strain ATCC BAA-125 / DSM 18197 / FERM 7344 / JCM 9153 / C-125) (Bacillus halodurans).